Here is a 148-residue protein sequence, read N- to C-terminus: Large ribosomal subunit protein uL15 (148 aa).

The segment at 1–51 (MNLSSLKPAEGAVKSRKRIGRGPGSGLGGTSTRGHKGAKSRSGYSKKIGFE) is disordered. Residues 21–31 (RGPGSGLGGTS) are compositionally biased toward gly residues.

Belongs to the universal ribosomal protein uL15 family. In terms of assembly, part of the 50S ribosomal subunit.

In terms of biological role, binds to the 23S rRNA. The sequence is that of Large ribosomal subunit protein uL15 from Porphyromonas gingivalis (strain ATCC BAA-308 / W83).